Consider the following 412-residue polypeptide: Keratin, type I microfibrillar 48 kDa, component 8C-1 (412 aa).

Serine 1 carries the N-acetylserine modification. The head stretch occupies residues 1-55; the sequence is SFNFCLPNLSFRSSCSSRPCVPSSCCGTTLPGACNIPANVGSCNWFCEGSFDGNE. Residues 55–366 form the IF rod domain; it reads EKETMQFLND…GLLDSEDCKL (312 aa). The coil 1A stretch occupies residues 56–90; the sequence is KETMQFLNDRLASYLEKVRQLERENAELESRILER. A linker 1 region spans residues 91–101; the sequence is SQQQEPLVCPN. Positions 102–202 are coil 1B; the sequence is YQSYFRTIEE…HEEEVNTLRS (101 aa). The interval 203 to 218 is linker 12; that stretch reads QLGDRLNVEVDAAPTV. Residues 219-362 are coil 2; it reads DLNRVLNETR…NTYRGLLDSE (144 aa). Positions 363–412 are tail; it reads DCKLPCNPCATTNACGKTITPCISSPCAPAAPCTPCVPRSRCGPCNSYVR.

This sequence belongs to the intermediate filament family.

Wool microfibrillar keratin. The sequence is that of Keratin, type I microfibrillar 48 kDa, component 8C-1 from Ovis aries (Sheep).